Reading from the N-terminus, the 293-residue chain is 4-diphosphocytidyl-2-C-methyl-D-erythritol kinase (293 aa).

The active site involves Lys-16. 99–109 serves as a coordination point for ATP; sequence PMGAGLGGGSS. Asp-141 is a catalytic residue.

It belongs to the GHMP kinase family. IspE subfamily.

It catalyses the reaction 4-CDP-2-C-methyl-D-erythritol + ATP = 4-CDP-2-C-methyl-D-erythritol 2-phosphate + ADP + H(+). The protein operates within isoprenoid biosynthesis; isopentenyl diphosphate biosynthesis via DXP pathway; isopentenyl diphosphate from 1-deoxy-D-xylulose 5-phosphate: step 3/6. In terms of biological role, catalyzes the phosphorylation of the position 2 hydroxy group of 4-diphosphocytidyl-2C-methyl-D-erythritol. In Burkholderia mallei (strain NCTC 10247), this protein is 4-diphosphocytidyl-2-C-methyl-D-erythritol kinase.